Consider the following 350-residue polypeptide: N-acetyllactosaminide beta-1,3-N-acetylglucosaminyltransferase 4 (350 aa).

Residues 1-4 (MLPR) are Cytoplasmic-facing. Residues 5–25 (LGCVLFCSLVVLLLSCLLLLK) form a helical; Signal-anchor for type II membrane protein membrane-spanning segment. At 26–350 (ERIPAGSSKA…RLKCAATHKP (325 aa)) the chain is on the lumenal side. Asn-53 and Asn-166 each carry an N-linked (GlcNAc...) asparagine glycan.

The protein belongs to the glycosyltransferase 31 family.

The protein localises to the golgi apparatus membrane. It catalyses the reaction a beta-D-galactosyl-(1-&gt;4)-N-acetyl-beta-D-glucosaminyl derivative + UDP-N-acetyl-alpha-D-glucosamine = an N-acetyl-beta-D-glucosaminyl-(1-&gt;3)-beta-D-galactosyl-(1-&gt;4)-N-acetyl-beta-D-glucosaminyl derivative + UDP + H(+). It participates in protein modification; protein glycosylation. Beta-1,3-N-acetylglucosaminyltransferase involved in the synthesis of poly-N-acetyllactosamine. Has activity for type 2 oligosaccharides. The polypeptide is N-acetyllactosaminide beta-1,3-N-acetylglucosaminyltransferase 4 (B3gnt4) (Mus musculus (Mouse)).